Consider the following 32-residue polypeptide: Cytochrome b6-f complex subunit 6 (32 aa).

Residues Ile4 to Thr26 form a helical membrane-spanning segment.

It belongs to the PetL family. As to quaternary structure, the 4 large subunits of the cytochrome b6-f complex are cytochrome b6, subunit IV (17 kDa polypeptide, PetD), cytochrome f and the Rieske protein, while the 4 small subunits are PetG, PetL, PetM and PetN. The complex functions as a dimer.

It is found in the plastid. The protein localises to the chloroplast thylakoid membrane. Its function is as follows. Component of the cytochrome b6-f complex, which mediates electron transfer between photosystem II (PSII) and photosystem I (PSI), cyclic electron flow around PSI, and state transitions. PetL is important for photoautotrophic growth as well as for electron transfer efficiency and stability of the cytochrome b6-f complex. The sequence is that of Cytochrome b6-f complex subunit 6 from Tetradesmus obliquus (Green alga).